Consider the following 906-residue polypeptide: Protein translocase subunit SecA (906 aa).

ATP-binding positions include Q87, 105–109, and D507; that span reads GEGKT. Residues C890, C892, C901, and H902 each coordinate Zn(2+).

Belongs to the SecA family. In terms of assembly, monomer and homodimer. Part of the essential Sec protein translocation apparatus which comprises SecA, SecYEG and auxiliary proteins SecDF-YajC and YidC. Zn(2+) is required as a cofactor.

Its subcellular location is the cell inner membrane. The protein localises to the cytoplasm. It catalyses the reaction ATP + H2O + cellular proteinSide 1 = ADP + phosphate + cellular proteinSide 2.. Its function is as follows. Part of the Sec protein translocase complex. Interacts with the SecYEG preprotein conducting channel. Has a central role in coupling the hydrolysis of ATP to the transfer of proteins into and across the cell membrane, serving both as a receptor for the preprotein-SecB complex and as an ATP-driven molecular motor driving the stepwise translocation of polypeptide chains across the membrane. The polypeptide is Protein translocase subunit SecA (Thiobacillus denitrificans (strain ATCC 25259 / T1)).